Consider the following 21-residue polypeptide: Fibrinogen beta chain (21 aa).

Residues 1 to 11 (EFPTDYDEGED) are compositionally biased toward acidic residues. The disordered stretch occupies residues 1–21 (EFPTDYDEGEDDRPKVGLGAR). Tyr6 is modified (sulfotyrosine).

As to quaternary structure, heterohexamer; disulfide linked. Contains 2 sets of 3 non-identical chains (alpha, beta and gamma). The 2 heterotrimers are in head to head conformation with the N-termini in a small central domain. Conversion of fibrinogen to fibrin is triggered by thrombin, which cleaves fibrinopeptides A and B from alpha and beta chains, and thus exposes the N-terminal polymerization sites responsible for the formation of the soft clot.

It localises to the secreted. Cleaved by the protease thrombin to yield monomers which, together with fibrinogen alpha (FGA) and fibrinogen gamma (FGG), polymerize to form an insoluble fibrin matrix. Fibrin has a major function in hemostasis as one of the primary components of blood clots. In addition, functions during the early stages of wound repair to stabilize the lesion and guide cell migration during re-epithelialization. Was originally thought to be essential for platelet aggregation, based on in vitro studies using anticoagulated blood. However subsequent studies have shown that it is not absolutely required for thrombus formation in vivo. Enhances expression of SELP in activated platelets. Maternal fibrinogen is essential for successful pregnancy. Fibrin deposition is also associated with infection, where it protects against IFNG-mediated hemorrhage. May also facilitate the antibacterial immune response via both innate and T-cell mediated pathways. This Bison bonasus (European bison) protein is Fibrinogen beta chain (FGB).